The primary structure comprises 372 residues: Protein zntB (372 aa).

The next 3 membrane-spanning stretches (helical) occupy residues 15 to 35 (LIMC…VIFI), 42 to 62 (LLGH…FMDL), and 70 to 90 (IGFY…AVIL). A disordered region spans residues 99 to 166 (ESGDSNHAHS…IAKSKNKKKS (68 aa)). Positions 114–124 (IEKHSSEKKEV) are enriched in basic and acidic residues. Positions 133–167 (NGKDKKQKQQKQKQQKQQQQQKQNIAKSKNKKKSK) form a coiled coil. Residues 137-146 (KKQKQQKQKQ) show a composition bias toward basic residues. A compositionally biased stretch (low complexity) spans 147–159 (QKQQQQQKQNIAK). 5 consecutive transmembrane segments (helical) span residues 170–192 (YLNS…EGVA), 207–229 (LMLA…IFSA), 237–257 (FKYC…FGLI), 271–291 (LAAV…PAAF), and 301–321 (FSNI…HSML). The disordered stretch occupies residues 328-372 (AGDGGHGHSHGGHGHSHGHGHSHGGHSHDSQHVESPQSSSFNAFA). A compositionally biased stretch (basic residues) spans 334 to 352 (GHSHGGHGHSHGHGHSHGG). Over residues 360–372 (VESPQSSSFNAFA) the composition is skewed to polar residues.

This sequence belongs to the ZIP transporter (TC 2.A.5) family. ZupT subfamily.

The protein localises to the membrane. May transport divalent cations. May participate, with dstA, in the regulation of the differentiation of stalk cells during development. The sequence is that of Protein zntB (zntB) from Dictyostelium discoideum (Social amoeba).